A 4490-amino-acid chain; its full sequence is Dynein axonemal heavy chain 8 (4490 aa).

S674 is modified (phosphoserine). 4 AAA regions span residues Y1808–T2030, N2090–L2309, Y2416–G2669, and Q2780–R3034. Residues G1846 to T1853 and G2128 to T2135 each bind ATP. Positions Y3049–C3346 are stalk. Coiled-coil stretches lie at residues D3072–T3164, L3290–S3354, and R3594–L3630. AAA regions lie at residues L3432 to E3662 and A3877 to N4091.

This sequence belongs to the dynein heavy chain family. Consists of at least two heavy chains and a number of intermediate and light chains. As to expression, expressed in spermatozoa (at protein level). Not detected in airway epithelial cells (at protein level).

The protein localises to the cytoplasm. It is found in the cytoskeleton. The protein resides in the flagellum axoneme. Functionally, force generating protein component of the outer dynein arms (ODAs) in the sperm flagellum. Produces force towards the minus ends of microtubules. Dynein has ATPase activity; the force-producing power stroke is thought to occur on release of ADP. Involved in sperm motility; implicated in sperm flagellar assembly. The polypeptide is Dynein axonemal heavy chain 8 (Homo sapiens (Human)).